Reading from the N-terminus, the 540-residue chain is T-complex protein 1 subunit alpha (540 aa).

This sequence belongs to the TCP-1 chaperonin family. As to quaternary structure, component of the T-complex protein 1 (TCP1) complex.

The protein resides in the cytoplasm. Molecular chaperone; assists the folding of proteins upon ATP hydrolysis. The protein is T-complex protein 1 subunit alpha (TCP1) of Encephalitozoon cuniculi (strain GB-M1) (Microsporidian parasite).